The sequence spans 404 residues: Argininosuccinate synthase (404 aa).

ATP contacts are provided by residues 10 to 18 (AYSGGVDTS) and Ala38. Tyr89 lines the L-citrulline pocket. Gly119 is a binding site for ATP. Positions 121, 125, and 126 each coordinate L-aspartate. Asn125 is an L-citrulline binding site. Arg129, Ser177, Ser186, Glu262, and Tyr274 together coordinate L-citrulline.

It belongs to the argininosuccinate synthase family. Type 1 subfamily. Homotetramer.

The protein localises to the cytoplasm. It catalyses the reaction L-citrulline + L-aspartate + ATP = 2-(N(omega)-L-arginino)succinate + AMP + diphosphate + H(+). It participates in amino-acid biosynthesis; L-arginine biosynthesis; L-arginine from L-ornithine and carbamoyl phosphate: step 2/3. The chain is Argininosuccinate synthase from Prochlorococcus marinus (strain AS9601).